The primary structure comprises 617 residues: 1-deoxy-D-xylulose-5-phosphate synthase (617 aa).

Residues His76 and 117-119 contribute to the thiamine diphosphate site; that span reads GHS. Asp148 lines the Mg(2+) pocket. Residues 149–150, Asn177, Tyr285, and Glu366 contribute to the thiamine diphosphate site; that span reads GA. Asn177 is a Mg(2+) binding site.

This sequence belongs to the transketolase family. DXPS subfamily. In terms of assembly, homodimer. The cofactor is Mg(2+). Requires thiamine diphosphate as cofactor.

It carries out the reaction D-glyceraldehyde 3-phosphate + pyruvate + H(+) = 1-deoxy-D-xylulose 5-phosphate + CO2. It functions in the pathway metabolic intermediate biosynthesis; 1-deoxy-D-xylulose 5-phosphate biosynthesis; 1-deoxy-D-xylulose 5-phosphate from D-glyceraldehyde 3-phosphate and pyruvate: step 1/1. Functionally, catalyzes the acyloin condensation reaction between C atoms 2 and 3 of pyruvate and glyceraldehyde 3-phosphate to yield 1-deoxy-D-xylulose-5-phosphate (DXP). This is 1-deoxy-D-xylulose-5-phosphate synthase from Histophilus somni (strain 129Pt) (Haemophilus somnus).